The following is a 277-amino-acid chain: Large ribosomal subunit protein uL2 (277 aa).

Disordered regions lie at residues 32–58 (KSLT…RGGG) and 225–277 (VAMN…RRNN).

The protein belongs to the universal ribosomal protein uL2 family. Part of the 50S ribosomal subunit. Forms a bridge to the 30S subunit in the 70S ribosome.

In terms of biological role, one of the primary rRNA binding proteins. Required for association of the 30S and 50S subunits to form the 70S ribosome, for tRNA binding and peptide bond formation. It has been suggested to have peptidyltransferase activity; this is somewhat controversial. Makes several contacts with the 16S rRNA in the 70S ribosome. This is Large ribosomal subunit protein uL2 from Borrelia recurrentis (strain A1).